We begin with the raw amino-acid sequence, 72 residues long: Translation initiation factor IF-1 (72 aa).

In terms of domain architecture, S1-like spans M1–R72.

This sequence belongs to the IF-1 family. As to quaternary structure, component of the 30S ribosomal translation pre-initiation complex which assembles on the 30S ribosome in the order IF-2 and IF-3, IF-1 and N-formylmethionyl-tRNA(fMet); mRNA recruitment can occur at any time during PIC assembly.

It localises to the cytoplasm. Functionally, one of the essential components for the initiation of protein synthesis. Stabilizes the binding of IF-2 and IF-3 on the 30S subunit to which N-formylmethionyl-tRNA(fMet) subsequently binds. Helps modulate mRNA selection, yielding the 30S pre-initiation complex (PIC). Upon addition of the 50S ribosomal subunit IF-1, IF-2 and IF-3 are released leaving the mature 70S translation initiation complex. In Wigglesworthia glossinidia brevipalpis, this protein is Translation initiation factor IF-1.